The primary structure comprises 660 residues: Long chain acyl-CoA synthetase 1 (660 aa).

225 to 236 (IMYTSGTSGDPK) provides a ligand contact to ATP. The interval 492–516 (DGWFHTGDIGEILPNGVLKIIDRKK) is fatty acid-binding.

It belongs to the ATP-dependent AMP-binding enzyme family. Mg(2+) serves as cofactor. Epidermal-specific expression along the entire stem. In cauline leaves, was expressed over the entire leaf surface, most strongly in trichomes and guard cells, but not in mesophyll cells. In flowers, the expression was detected in the stigma and filaments of the stamens, and in the carpel was expressed specifically in ovaries. In roots, was expressed in primary and lateral roots, but not in the root tips.

It is found in the endoplasmic reticulum. It catalyses the reaction a long-chain fatty acid + ATP + CoA = a long-chain fatty acyl-CoA + AMP + diphosphate. It functions in the pathway lipid metabolism; fatty acid metabolism. Functionally, activation of long-chain fatty acids for both synthesis of cellular lipids, and degradation via beta-oxidation. Acts in both the wax and cutin pathways. Preferentially uses palmitate, palmitoleate, linoleate and eicosenoate. Seems to have a specific activity against very long-chain fatty acid (VLCFA) class with acids longer than 24 carbons (C(24)). In Arabidopsis thaliana (Mouse-ear cress), this protein is Long chain acyl-CoA synthetase 1 (LACS1).